A 502-amino-acid chain; its full sequence is ATP synthase subunit alpha (502 aa).

169-176 contacts ATP; it reads GDRQTGKT.

Belongs to the ATPase alpha/beta chains family. F-type ATPases have 2 components, CF(1) - the catalytic core - and CF(0) - the membrane proton channel. CF(1) has five subunits: alpha(3), beta(3), gamma(1), delta(1), epsilon(1). CF(0) has three main subunits: a(1), b(2) and c(9-12). The alpha and beta chains form an alternating ring which encloses part of the gamma chain. CF(1) is attached to CF(0) by a central stalk formed by the gamma and epsilon chains, while a peripheral stalk is formed by the delta and b chains.

Its subcellular location is the cell inner membrane. It carries out the reaction ATP + H2O + 4 H(+)(in) = ADP + phosphate + 5 H(+)(out). Produces ATP from ADP in the presence of a proton gradient across the membrane. The alpha chain is a regulatory subunit. The sequence is that of ATP synthase subunit alpha from Pelobacter propionicus (strain DSM 2379 / NBRC 103807 / OttBd1).